The sequence spans 689 residues: Glycine--tRNA ligase beta subunit (689 aa).

The protein belongs to the class-II aminoacyl-tRNA synthetase family. Tetramer of two alpha and two beta subunits.

It localises to the cytoplasm. The catalysed reaction is tRNA(Gly) + glycine + ATP = glycyl-tRNA(Gly) + AMP + diphosphate. This chain is Glycine--tRNA ligase beta subunit, found in Salmonella heidelberg (strain SL476).